The chain runs to 286 residues: KH domain-containing protein At2g38610 (286 aa).

N-acetylserine is present on S2. Residues 141 to 208 (EIPVDNYPNF…EHLNEQLHIL (68 aa)) form the KH domain. The segment at 256–286 (SNNLREESPGPSGGGSVSPFNSSGKRPKTGC) is disordered. 2 positions are modified to phosphoserine: S263 and S273.

The protein resides in the nucleus. This Arabidopsis thaliana (Mouse-ear cress) protein is KH domain-containing protein At2g38610.